Consider the following 244-residue polypeptide: Putative esophageal gland cell secretory protein 6 (244 aa).

The signal sequence occupies residues 1–22; sequence MDRRFTVFLVIALVTSIYEVLS. Cysteines 88 and 91 form a disulfide.

This sequence belongs to the SelWTH family. SELT subfamily.

In Heterodera glycines (Soybean cyst nematode worm), this protein is Putative esophageal gland cell secretory protein 6 (HSP6).